The following is a 534-amino-acid chain: Phosphoenolpyruvate carboxykinase (ATP) (534 aa).

Arg59, Tyr200, and Lys206 together coordinate substrate. ATP-binding positions include Lys206, His225, and Gly242–Thr250. Lys206 and His225 together coordinate Mn(2+). Asp263 serves as a coordination point for Mn(2+). ATP-binding positions include Glu291, Arg327, Arg443–Ile444, and Thr449. Arg327 provides a ligand contact to substrate.

The protein belongs to the phosphoenolpyruvate carboxykinase (ATP) family. The cofactor is Mn(2+).

The protein localises to the cytoplasm. The enzyme catalyses oxaloacetate + ATP = phosphoenolpyruvate + ADP + CO2. Its pathway is carbohydrate biosynthesis; gluconeogenesis. Functionally, involved in the gluconeogenesis. Catalyzes the conversion of oxaloacetate (OAA) to phosphoenolpyruvate (PEP) through direct phosphoryl transfer between the nucleoside triphosphate and OAA. This Lachnospira eligens (strain ATCC 27750 / DSM 3376 / VPI C15-48 / C15-B4) (Eubacterium eligens) protein is Phosphoenolpyruvate carboxykinase (ATP).